The primary structure comprises 228 residues: MSQSPIELKGSSFTLSVVHLHDSRPEVIRQALQEKVDQAPAFLKNAPVVINVATLPNGANWKDLQQAVTSAGLRIVGISGCQDERQKRAIARAGLPLLSEGKGQKLAPEPVISPPENVPTQTRIINTPVRSGQQIYARNCDLIVISSVSAGAELIADGNIHIYGMMRGRALAGASGDAKCQIFCTHLGAELVSIAGQYWLSDQIPLEYFGQAARLYLQDNTLTIQPLN.

The protein belongs to the MinC family. Interacts with MinD and FtsZ.

Functionally, cell division inhibitor that blocks the formation of polar Z ring septums. Rapidly oscillates between the poles of the cell to destabilize FtsZ filaments that have formed before they mature into polar Z rings. Prevents FtsZ polymerization. The sequence is that of Probable septum site-determining protein MinC from Yersinia pseudotuberculosis serotype O:1b (strain IP 31758).